Here is a 179-residue protein sequence, read N- to C-terminus: UPF0167 protein PA1536 (179 aa).

It belongs to the UPF0167 family.

The sequence is that of UPF0167 protein PA1536 from Pseudomonas aeruginosa (strain ATCC 15692 / DSM 22644 / CIP 104116 / JCM 14847 / LMG 12228 / 1C / PRS 101 / PAO1).